We begin with the raw amino-acid sequence, 207 residues long: Large ribosomal subunit protein uL4 (207 aa).

The interval 52 to 77 (RGWADVSGGGRKPWRQKGTGRARAGS) is disordered.

Belongs to the universal ribosomal protein uL4 family. As to quaternary structure, part of the 50S ribosomal subunit.

One of the primary rRNA binding proteins, this protein initially binds near the 5'-end of the 23S rRNA. It is important during the early stages of 50S assembly. It makes multiple contacts with different domains of the 23S rRNA in the assembled 50S subunit and ribosome. Functionally, forms part of the polypeptide exit tunnel. In Moorella thermoacetica (strain ATCC 39073 / JCM 9320), this protein is Large ribosomal subunit protein uL4.